A 212-amino-acid chain; its full sequence is Peptide methionine sulfoxide reductase MsrA (212 aa).

The active site involves C52.

This sequence belongs to the MsrA Met sulfoxide reductase family.

It carries out the reaction L-methionyl-[protein] + [thioredoxin]-disulfide + H2O = L-methionyl-(S)-S-oxide-[protein] + [thioredoxin]-dithiol. It catalyses the reaction [thioredoxin]-disulfide + L-methionine + H2O = L-methionine (S)-S-oxide + [thioredoxin]-dithiol. Has an important function as a repair enzyme for proteins that have been inactivated by oxidation. Catalyzes the reversible oxidation-reduction of methionine sulfoxide in proteins to methionine. The sequence is that of Peptide methionine sulfoxide reductase MsrA from Escherichia coli (strain SMS-3-5 / SECEC).